The sequence spans 195 residues: dTTP/UTP pyrophosphatase (195 aa).

Aspartate 70 acts as the Proton acceptor in catalysis.

This sequence belongs to the Maf family. YhdE subfamily. A divalent metal cation serves as cofactor.

The protein localises to the cytoplasm. It carries out the reaction dTTP + H2O = dTMP + diphosphate + H(+). The catalysed reaction is UTP + H2O = UMP + diphosphate + H(+). Nucleoside triphosphate pyrophosphatase that hydrolyzes dTTP and UTP. May have a dual role in cell division arrest and in preventing the incorporation of modified nucleotides into cellular nucleic acids. This Photorhabdus laumondii subsp. laumondii (strain DSM 15139 / CIP 105565 / TT01) (Photorhabdus luminescens subsp. laumondii) protein is dTTP/UTP pyrophosphatase.